The sequence spans 69 residues: MNVKESEPAQADLQASWMCAECGYIYDPAEGNLETNIRPGMPFDKLPDDWSCPVCNHPKNQFTKFISQL.

The Rubredoxin-like domain occupies 14 to 69 (QASWMCAECGYIYDPAEGNLETNIRPGMPFDKLPDDWSCPVCNHPKNQFTKFISQL). The Fe cation site is built by Cys-19, Cys-22, Cys-52, and Cys-55.

The protein belongs to the rubredoxin family. In terms of assembly, monomer. Requires Fe(3+) as cofactor.

Its function is as follows. Serves as an electron acceptor for pyruvate ferredoxin oxidoreductase (PFOR). This Chlorobaculum tepidum (strain ATCC 49652 / DSM 12025 / NBRC 103806 / TLS) (Chlorobium tepidum) protein is Rubredoxin-1 (rub1).